Here is a 449-residue protein sequence, read N- to C-terminus: Exodeoxyribonuclease 7 large subunit (449 aa).

The protein belongs to the XseA family. Heterooligomer composed of large and small subunits.

It is found in the cytoplasm. It carries out the reaction Exonucleolytic cleavage in either 5'- to 3'- or 3'- to 5'-direction to yield nucleoside 5'-phosphates.. Bidirectionally degrades single-stranded DNA into large acid-insoluble oligonucleotides, which are then degraded further into small acid-soluble oligonucleotides. This chain is Exodeoxyribonuclease 7 large subunit, found in Aliivibrio fischeri (strain ATCC 700601 / ES114) (Vibrio fischeri).